We begin with the raw amino-acid sequence, 226 residues long: MNIEVGNVSHTGAIISWSPSEPCLEDYYHIMYRPNWNSIFSGYLRYNFHHEEKVPRTITSVALEHLAPSTLYFLCISCKKAAFPYSHYCTMFHTLDKSPLAAGGSLVDPQISLWVLMAILLACFTAVLAFICLQFWCLRCHEPRWSYRAGQMEEANGLVRWPEETPALGQREEDLQGFPLEELPRKNSGARAKAEPEAEAIQDALEVVALAREIGNQPAILPHYRE.

The Fibronectin type-III domain occupies 1–101; the sequence is MNIEVGNVSH…FHTLDKSPLA (101 aa). Residues 113-133 form a helical membrane-spanning segment; it reads LWVLMAILLACFTAVLAFICL.

The protein resides in the membrane. The chain is Fibronectin type III domain-containing protein 9 (Fndc9) from Mus musculus (Mouse).